Consider the following 133-residue polypeptide: Type III secretion protein HrcQb (133 aa).

The span at 1–21 (MSTEDLYQDDVEMLDDYEEPV) shows a compositional bias: acidic residues. The disordered stretch occupies residues 1 to 60 (MSTEDLYQDDVEMLDDYEEPVPEQADQQQRDDEYAEHAFGYADSDAEHEEQSGDHHESPM). The span at 49-59 (EEQSGDHHESP) shows a compositional bias: basic and acidic residues.

This sequence belongs to the FliN/MopA/SpaO family. Homotetramer. The four monomers assemble into two tightly bound homodimers. Interacts with HrcQa.

It localises to the cytoplasm. In terms of biological role, component of the type III secretion system, which is required for effector protein delivery, parasitism, and pathogenicity. Probably participates in the formation of a C-ring-like assembly along with HrcQa. The sequence is that of Type III secretion protein HrcQb (hrcQb) from Pseudomonas syringae pv. syringae.